The following is a 211-amino-acid chain: Guanylate kinase (211 aa).

The 181-residue stretch at 5 to 185 folds into the Guanylate kinase-like domain; the sequence is GLLLILSSPS…AEEQLKMILS (181 aa). 12-19 contacts ATP; it reads SPSGAGKS.

The protein belongs to the guanylate kinase family.

It localises to the cytoplasm. It catalyses the reaction GMP + ATP = GDP + ADP. Essential for recycling GMP and indirectly, cGMP. The polypeptide is Guanylate kinase (Cereibacter sphaeroides (strain ATCC 17023 / DSM 158 / JCM 6121 / CCUG 31486 / LMG 2827 / NBRC 12203 / NCIMB 8253 / ATH 2.4.1.) (Rhodobacter sphaeroides)).